The primary structure comprises 392 residues: Nuclear speckle splicing regulatory protein 1 homolog (392 aa).

3 disordered regions span residues 1–73, 113–169, and 187–357; these read MASK…IFDY, RQLE…AFND, and LLND…ARLD. 5 stretches are compositionally biased toward basic and acidic residues: residues 54–65, 113–132, 149–160, 205–238, and 313–357; these read KAAEREHQKAEA, RQLE…REKE, KQQEEVKKHREQ, QKNV…KSIY, and KSIE…ARLD. A coiled-coil region spans residues 76-132; that stretch reads NYDEIQAIKNEKKEEARKADKNRESKYAENIIKAHARRQLEQFSREERQQLREREKE.

This sequence belongs to the NSRP1 family. In terms of tissue distribution, expressed in the intestine, nervous system and head neurons in both larvae and adults. Expressed in the distal tip cell.

It is found in the cytoplasm. The protein localises to the nucleus. Functionally, required for the cessation of distal tip cell migration at the end of larval morphogenesis. This is Nuclear speckle splicing regulatory protein 1 homolog (ccdc-55) from Caenorhabditis elegans.